Consider the following 325-residue polypeptide: uncharacterized protein (325 aa).

It belongs to the mgp1/MG371 family.

This is an uncharacterized protein from Mycoplasma pneumoniae (strain ATCC 29342 / M129 / Subtype 1) (Mycoplasmoides pneumoniae).